Consider the following 239-residue polypeptide: Glutathione S-transferase verG (239 aa).

The GST N-terminal domain occupies 18 to 101 (KPLIFVMEGR…YLSNKYDAKR (84 aa)). The 131-residue stretch at 107 to 237 (NAAENLEICN…ELDSRKEIAI (131 aa)) folds into the GST C-terminal domain.

It belongs to the GST superfamily.

The catalysed reaction is RX + glutathione = an S-substituted glutathione + a halide anion + H(+). The protein operates within mycotoxin biosynthesis. Functionally, glutathione S-transferase; part of the gene cluster that mediates the biosynthesis of 11'-deoxyverticillin A, one of the dimeric epipolythiodioxopiperazines (ETPs) from the verticillin family that act as mycotoxins. 11'-deoxyverticillin A is required for normal conidiation. The nonribosomal peptide synthetase verP is speculated to be responsible for condensation of amino acids to form the carbon skeleton of verticillin, whereas the cluster-specific tailoring enzymes are involved in further modifications leading to the production of 11'-deoxyverticillin A. The chain is Glutathione S-transferase verG from Clonostachys rogersoniana.